The following is a 305-amino-acid chain: Methionyl-tRNA formyltransferase (305 aa).

Residue 111 to 114 participates in (6S)-5,6,7,8-tetrahydrofolate binding; that stretch reads SLLP.

The protein belongs to the Fmt family.

It carries out the reaction L-methionyl-tRNA(fMet) + (6R)-10-formyltetrahydrofolate = N-formyl-L-methionyl-tRNA(fMet) + (6S)-5,6,7,8-tetrahydrofolate + H(+). Functionally, attaches a formyl group to the free amino group of methionyl-tRNA(fMet). The formyl group appears to play a dual role in the initiator identity of N-formylmethionyl-tRNA by promoting its recognition by IF2 and preventing the misappropriation of this tRNA by the elongation apparatus. The polypeptide is Methionyl-tRNA formyltransferase (Campylobacter jejuni subsp. jejuni serotype O:6 (strain 81116 / NCTC 11828)).